Reading from the N-terminus, the 202-residue chain is Dephospho-CoA kinase (202 aa).

In terms of domain architecture, DPCK spans 3 to 202 (IFGLTGGIGS…ISHRSKYLSC (200 aa)). Residue 11–16 (GSGKSL) participates in ATP binding.

The protein belongs to the CoaE family.

Its subcellular location is the cytoplasm. The catalysed reaction is 3'-dephospho-CoA + ATP = ADP + CoA + H(+). It participates in cofactor biosynthesis; coenzyme A biosynthesis; CoA from (R)-pantothenate: step 5/5. Catalyzes the phosphorylation of the 3'-hydroxyl group of dephosphocoenzyme A to form coenzyme A. This is Dephospho-CoA kinase from Ehrlichia chaffeensis (strain ATCC CRL-10679 / Arkansas).